Here is a 413-residue protein sequence, read N- to C-terminus: NAD(P)H oxidoreductase RTN4IP1, mitochondrial (413 aa).

The transit peptide at 1 to 23 directs the protein to the mitochondrion; it reads MTAAGFNSILCLRQLVRLNRRQY. The segment at 27 to 52 is disordered; sequence AKSVLSGSQTNDQATPPPTSKSADKM. Polar residues predominate over residues 31–40; sequence LSGSQTNDQA. The 345-residue stretch at 61-405 folds into the Enoyl reductase (ER) domain; the sequence is GDIDELQLSE…SGHLRGKIVV (345 aa). 9 residues coordinate NADPH: serine 228, glycine 230, valine 231, serine 251, tyrosine 269, glycine 353, phenylalanine 355, histidine 398, and arginine 400.

The protein belongs to the zinc-containing alcohol dehydrogenase family. Quinone oxidoreductase subfamily.

Its subcellular location is the mitochondrion matrix. It catalyses the reaction a quinone + NADH + H(+) = a quinol + NAD(+). It carries out the reaction a quinone + NADPH + H(+) = a quinol + NADP(+). It functions in the pathway cofactor biosynthesis; ubiquinone biosynthesis. Its function is as follows. NAD(P)H oxidoreductase. Involved in the ubiquinone biosynthetic pathway. This Drosophila melanogaster (Fruit fly) protein is NAD(P)H oxidoreductase RTN4IP1, mitochondrial.